The sequence spans 68 residues: Neuronal regeneration-related protein (68 aa).

The segment at 21 to 54 (MEGRLPKGRLPVPKEVNRKKNDETNAASLTPLGS) is disordered. Polar residues predominate over residues 44 to 54 (TNAASLTPLGS).

As to quaternary structure, interacts with the latency-associated peptides (LAP) of TGFB1 and TGFB2; the interaction results in a decrease in TGFB autoinduction. Interacts with FLNA. Phosphorylated on Ser-59. Phosphorylation decreases stability and activity.

The protein resides in the cytoplasm. Its function is as follows. May have roles in neural function and cellular differentiation. Ectopic expression promotes axonal regeneration, induces differentiation of fibroblast into myofibroblast, induces myofibroblast ameboid migration, augments motility of gliomas, and increases retinoic-acid regulation of lipid-droplet biogenesis. Down-regulates the expression of TGFB1 and TGFB2 but not of TGFB3. May play a role in the regulation of alveolar generation. The sequence is that of Neuronal regeneration-related protein (NREP) from Macaca fascicularis (Crab-eating macaque).